The sequence spans 658 residues: Probable rhamnogalacturonate lyase B (658 aa).

An N-terminal signal peptide occupies residues 1-19 (MRFAIPLGAACAWAGVALA). N-linked (GlcNAc...) asparagine glycans are attached at residues N110, N143, N239, N280, N522, N530, N592, and N633.

The protein belongs to the polysaccharide lyase 4 family.

Its subcellular location is the secreted. It catalyses the reaction Endotype eliminative cleavage of L-alpha-rhamnopyranosyl-(1-&gt;4)-alpha-D-galactopyranosyluronic acid bonds of rhamnogalacturonan I domains in ramified hairy regions of pectin leaving L-rhamnopyranose at the reducing end and 4-deoxy-4,5-unsaturated D-galactopyranosyluronic acid at the non-reducing end.. Its function is as follows. Pectinolytic enzymes consist of four classes of enzymes: pectin lyase, polygalacturonase, pectin methylesterase and rhamnogalacturonase. Degrades the rhamnogalacturonan I (RG-I) backbone of pectin. This chain is Probable rhamnogalacturonate lyase B (rglB), found in Aspergillus fumigatus (strain CBS 144.89 / FGSC A1163 / CEA10) (Neosartorya fumigata).